A 410-amino-acid polypeptide reads, in one-letter code: Arginine deiminase (410 aa).

The active-site Amidino-cysteine intermediate is Cys-400.

It belongs to the arginine deiminase family.

It localises to the cytoplasm. It carries out the reaction L-arginine + H2O = L-citrulline + NH4(+). The protein operates within amino-acid degradation; L-arginine degradation via ADI pathway; carbamoyl phosphate from L-arginine: step 1/2. The protein is Arginine deiminase of Levilactobacillus brevis (strain ATCC 367 / BCRC 12310 / CIP 105137 / JCM 1170 / LMG 11437 / NCIMB 947 / NCTC 947) (Lactobacillus brevis).